A 1048-amino-acid chain; its full sequence is B3 domain-containing protein Os02g0598200 (1048 aa).

Residues 1–345 are disordered; the sequence is MDGAVRGQGC…QKERVASSDN (345 aa). Basic residues predominate over residues 16-25; the sequence is SFNKTKKKNR. Composition is skewed to basic and acidic residues over residues 26–134, 151–162, 169–214, 243–253, 281–295, and 332–345; these read NCSD…SDDM, KKNSRNDADEEK, CSDD…GDKK, KNMKSDGDSYK, AKER…MEMK, and LKRE…SSDN. Residues 375-468 constitute a DNA-binding region (TF-B3 1); it reads AFAFFKFVRD…TFSVRVFGID (94 aa). Residues 505–528 are disordered; it reads QYQDSEDIHDGPNVSGESPRSKEP. A DNA-binding region (TF-B3 2) is located at residues 953 to 1048; the sequence is LQFCIPSTIQ…LAFQVYITRK (96 aa).

The protein localises to the nucleus. In Oryza sativa subsp. japonica (Rice), this protein is B3 domain-containing protein Os02g0598200.